The sequence spans 551 residues: ATP synthase subunit alpha (551 aa).

174-181 (GDRQTGKT) is a binding site for ATP.

It belongs to the ATPase alpha/beta chains family. In terms of assembly, F-type ATPases have 2 components, CF(1) - the catalytic core - and CF(0) - the membrane proton channel. CF(1) has five subunits: alpha(3), beta(3), gamma(1), delta(1), epsilon(1). CF(0) has three main subunits: a(1), b(2) and c(9-12). The alpha and beta chains form an alternating ring which encloses part of the gamma chain. CF(1) is attached to CF(0) by a central stalk formed by the gamma and epsilon chains, while a peripheral stalk is formed by the delta and b chains.

It localises to the cell inner membrane. The catalysed reaction is ATP + H2O + 4 H(+)(in) = ADP + phosphate + 5 H(+)(out). Functionally, produces ATP from ADP in the presence of a proton gradient across the membrane. The alpha chain is a regulatory subunit. The protein is ATP synthase subunit alpha of Salinibacter ruber (strain DSM 13855 / M31).